We begin with the raw amino-acid sequence, 558 residues long: Urocanate hydratase (558 aa).

NAD(+) is bound by residues 54 to 55, glutamine 132, 178 to 180, glutamate 198, 244 to 245, 265 to 269, 275 to 276, and tyrosine 324; these read GG, GMG, NA, QTSAH, and YL. Cysteine 412 is an active-site residue. Glycine 494 contributes to the NAD(+) binding site.

Belongs to the urocanase family. Requires NAD(+) as cofactor.

It localises to the cytoplasm. It carries out the reaction 4-imidazolone-5-propanoate = trans-urocanate + H2O. The protein operates within amino-acid degradation; L-histidine degradation into L-glutamate; N-formimidoyl-L-glutamate from L-histidine: step 2/3. Its function is as follows. Catalyzes the conversion of urocanate to 4-imidazolone-5-propionate. This Acinetobacter baumannii (strain AB307-0294) protein is Urocanate hydratase.